A 434-amino-acid polypeptide reads, in one-letter code: UDP-N-acetylmuramate--L-alanine ligase (434 aa).

Residue 110-116 participates in ATP binding; it reads GAHGKTS.

Belongs to the MurCDEF family.

The protein localises to the cytoplasm. It catalyses the reaction UDP-N-acetyl-alpha-D-muramate + L-alanine + ATP = UDP-N-acetyl-alpha-D-muramoyl-L-alanine + ADP + phosphate + H(+). It participates in cell wall biogenesis; peptidoglycan biosynthesis. In terms of biological role, cell wall formation. The polypeptide is UDP-N-acetylmuramate--L-alanine ligase (Limosilactobacillus reuteri (strain DSM 20016) (Lactobacillus reuteri)).